Here is a 353-residue protein sequence, read N- to C-terminus: Ribosomal RNA large subunit methyltransferase M (353 aa).

Residues S183, 216-219 (APGG), D235, D255, and D271 contribute to the S-adenosyl-L-methionine site. K300 functions as the Proton acceptor in the catalytic mechanism.

Belongs to the class I-like SAM-binding methyltransferase superfamily. RNA methyltransferase RlmE family. RlmM subfamily. In terms of assembly, monomer.

The protein resides in the cytoplasm. It catalyses the reaction cytidine(2498) in 23S rRNA + S-adenosyl-L-methionine = 2'-O-methylcytidine(2498) in 23S rRNA + S-adenosyl-L-homocysteine + H(+). In terms of biological role, catalyzes the 2'-O-methylation at nucleotide C2498 in 23S rRNA. In Azotobacter vinelandii (strain DJ / ATCC BAA-1303), this protein is Ribosomal RNA large subunit methyltransferase M.